The chain runs to 790 residues: MGDVIPLKVNFDLINVDDEPFELELLRDPYSLKSWLRYIKTHEGSTLEKRVLLFERACSELPGSYKIWKSYLELRVAHVEHLNPYFHAEAFASVNDCFERSLILLHKMPVIWKLYLQFLMKQPNVTKIRCTFNSALRALPVTQHDDIWDMFTKYAEDIGGLFCIHVYRRYIQVEPRAIENYIEILCKLGLWNEAARQYEDILNRPVFLSAKRKSNYQIWLEFSELVVQHPDHTQNIDVEKVFRAGIKRFSDQAGKLWTYLAQYYIRIGDYEKARSTFYEGMNNIMTVRNFTIIFDAFVEFEEQWLSARVEASSGNANDELSIDFHMAWLEKILDKRPLYINDVLLRQNINNVDEWLRRVKFLEDDSEKVVQVYTDAIKNVNPKLAHGSLGKLFSEFARFYENFDDLEQSRIIFEKATHVPYKTVNELAQVWIDWAEMELRHQNFDAARKLIGDAVHAPRKSHISFFDESLSPQVRLHKSSKIWMYYLDLEESVGTIETTRKLYDRVFELKIATPQVVVNYANLLEENAYFEDSFKIYERGVALFSYPVAFELWNLYLTKFVKRYQGTHMERTRDLFEQALEGCPPEFSKSIYLLYADFEEKFGKAKRSISILEKAADKVKTADRLAIYNVLLVKVALNYGVLATRTVYEKAIESLSDSEVKDMCLRFAEMETKLGEIDRARLIYIHGSQYCDPRVETDYWKAWQEFEIRYGNPEETVKEMLRIKRSVQTKFSTDSLHIAKRAAKIESAAAPMDPMEQLEMEKSEGPKALAGFVLSKSNPQETSKITGEEN.

HAT repeat units follow at residues 12–44 (DLINVDDEPFELELLRDPYSLKSWLRYIKTHEG), 45–77 (STLEKRVLLFERACSELPGSYKIWKSYLELRVA), 89–121 (EAFASVNDCFERSLILLHKMPVIWKLYLQFLMK), 123–157 (PNVTKIRCTFNSALRALPVTQHDDIWDMFTKYAED), 159–190 (GGLFCIHVYRRYIQVEPRAIENYIEILCKLGL), 193–228 (EAARQYEDILNRPVFLSAKRKSNYQIWLEFSELVVQ), 233–266 (TQNIDVEKVFRAGIKRFSDQAGKLWTYLAQYYIR), 268–303 (GDYEKARSTFYEGMNNIMTVRNFTIIFDAFVEFEEQ), 331–364 (KILDKRPLYINDVLLRQNINNVDEWLRRVKFLED), 368–402 (KVVQVYTDAIKNVNPKLAHGSLGKLFSEFARFYEN), 404–440 (DDLEQSRIIFEKATHVPYKTVNELAQVWIDWAEMELR), 457–492 (APRKSHISFFDESLSPQVRLHKSSKIWMYYLDLEES), 494–526 (GTIETTRKLYDRVFELKIATPQVVVNYANLLEE), 528–562 (AYFEDSFKIYERGVALFSYPVAFELWNLYLTKFVK), 567–601 (THMERTRDLFEQALEGCPPEFSKSIYLLYADFEEK), 639–673 (YGVLATRTVYEKAIESLSDSEVKDMCLRFAEMETK), and 675–709 (GEIDRARLIYIHGSQYCDPRVETDYWKAWQEFEIR). A disordered region spans residues 769–790 (LAGFVLSKSNPQETSKITGEEN). Residues 775 to 790 (SKSNPQETSKITGEEN) show a composition bias toward polar residues.

Belongs to the crooked-neck family. In terms of assembly, belongs to the 40S cdc5-associated complex (or cwf complex), a spliceosome sub-complex reminiscent of a late-stage spliceosome composed of the U2, U5 and U6 snRNAs and at least brr2, cdc5, cwf2/prp3, cwf3/syf1, cwf4/syf3, cwf5/ecm2, spp42/cwf6, cwf7/spf27, cwf8, cwf9, cwf10, cwf11, cwf12, prp45/cwf13, cwf14, cwf15, cwf16, cwf17, cwf18, cwf19, cwf20, cwf21, cwf22, cwf23, cwf24, cwf25, cwf26, cyp7/cwf27, cwf28, cwf29/ist3, lea1, msl1, prp5/cwf1, prp10, prp12/sap130, prp17, prp22, sap61, sap62, sap114, sap145, slu7, smb1, smd1, smd3, smf1, smg1 and syf2.

It is found in the nucleus. Its function is as follows. Involved in pre-mRNA splicing and cell cycle progression. This is Pre-mRNA-splicing factor cwf3 (cwf3) from Schizosaccharomyces pombe (strain 972 / ATCC 24843) (Fission yeast).